A 436-amino-acid chain; its full sequence is GTPase Der (436 aa).

2 consecutive EngA-type G domains span residues 4 to 167 (PTIA…PNEE) and 175 to 351 (IKFS…QSQN). Residues 10–17 (GRPNVGKS), 57–61 (DTGGI), 119–122 (NKVD), 181–188 (GRPNVGKS), 229–233 (DTAGM), and 294–297 (NKWD) contribute to the GTP site. A KH-like domain is found at 352-436 (TRIPSAVLND…PIHLIARKRK (85 aa)).

The protein belongs to the TRAFAC class TrmE-Era-EngA-EngB-Septin-like GTPase superfamily. EngA (Der) GTPase family. Associates with the 50S ribosomal subunit.

In terms of biological role, GTPase that plays an essential role in the late steps of ribosome biogenesis. This Streptococcus sanguinis (strain SK36) protein is GTPase Der.